A 177-amino-acid chain; its full sequence is Co-chaperone protein HscB homolog (177 aa).

The J domain maps to 8–80 (DYFSLFGMPR…LSRAQYLLEL (73 aa)).

This sequence belongs to the HscB family. In terms of assembly, interacts with HscA and stimulates its ATPase activity.

Functionally, co-chaperone involved in the maturation of iron-sulfur cluster-containing proteins. Seems to help targeting proteins to be folded toward HscA. The chain is Co-chaperone protein HscB homolog from Azoarcus sp. (strain BH72).